Here is a 450-residue protein sequence, read N- to C-terminus: Tubulin alpha-4 chain (450 aa).

GTP is bound at residue Gln11. Lys40 is subject to N6-acetyllysine. GTP-binding residues include Glu71, Gly144, Thr145, Thr179, Asn206, and Asn228. Residue Glu71 coordinates Mg(2+). Glu254 is a catalytic residue. The disordered stretch occupies residues Asp431–Tyr450.

Belongs to the tubulin family. In terms of assembly, dimer of alpha and beta chains. A typical microtubule is a hollow water-filled tube with an outer diameter of 25 nm and an inner diameter of 15 nM. Alpha-beta heterodimers associate head-to-tail to form protofilaments running lengthwise along the microtubule wall with the beta-tubulin subunit facing the microtubule plus end conferring a structural polarity. Microtubules usually have 13 protofilaments but different protofilament numbers can be found in some organisms and specialized cells. The cofactor is Mg(2+). Undergoes a tyrosination/detyrosination cycle, the cyclic removal and re-addition of a C-terminal tyrosine residue by the enzymes tubulin tyrosine carboxypeptidase (TTCP) and tubulin tyrosine ligase (TTL), respectively. In terms of processing, acetylation of alpha chains at Lys-40 stabilizes microtubules and affects affinity and processivity of microtubule motors. This modification has a role in multiple cellular functions, ranging from cell motility, cell cycle progression or cell differentiation to intracellular trafficking and signaling.

The protein resides in the cytoplasm. The protein localises to the cytoskeleton. It catalyses the reaction GTP + H2O = GDP + phosphate + H(+). In terms of biological role, tubulin is the major constituent of microtubules, a cylinder consisting of laterally associated linear protofilaments composed of alpha- and beta-tubulin heterodimers. Microtubules grow by the addition of GTP-tubulin dimers to the microtubule end, where a stabilizing cap forms. Below the cap, tubulin dimers are in GDP-bound state, owing to GTPase activity of alpha-tubulin. This Gossypium hirsutum (Upland cotton) protein is Tubulin alpha-4 chain.